The following is a 905-amino-acid chain: Protein translocase subunit SecA (905 aa).

ATP-binding positions include glutamine 86, glycine 104–threonine 108, and aspartate 499. Positions 890, 892, 901, and 902 each coordinate Zn(2+).

This sequence belongs to the SecA family. Monomer and homodimer. Part of the essential Sec protein translocation apparatus which comprises SecA, SecYEG and auxiliary proteins SecDF-YajC and YidC. Requires Zn(2+) as cofactor.

Its subcellular location is the cell inner membrane. The protein resides in the cytoplasm. The catalysed reaction is ATP + H2O + cellular proteinSide 1 = ADP + phosphate + cellular proteinSide 2.. Its function is as follows. Part of the Sec protein translocase complex. Interacts with the SecYEG preprotein conducting channel. Has a central role in coupling the hydrolysis of ATP to the transfer of proteins into and across the cell membrane, serving both as a receptor for the preprotein-SecB complex and as an ATP-driven molecular motor driving the stepwise translocation of polypeptide chains across the membrane. This Rickettsia typhi (strain ATCC VR-144 / Wilmington) protein is Protein translocase subunit SecA.